Here is a 314-residue protein sequence, read N- to C-terminus: MEFDLGEYFRAAFEDKLLVKMPDREDDFLTPATRLLEKRREMVEVEQALSTQKEEFQMKSESLQQRRAELELKEEKLKDSLFKFDKFLKENDSKRKRALHKAAEERQLAAHKEREALRLQAENTQLMQRKGTLLERQEKNSKYQQYLQRVLERTDEFQEVQEMIDRFNTLMATQNKLLKRDLENQELAEREKARLLHYQEETRSQILELNNQIAQLQGELERVRAVAFQWESRWAQIQNTAAENTLRLGRIRMSTLNLFQTISKQMRLKTEISVEDTEAQLEKIQICFEDLSAIYKDLKKAGTTPQTPAVPTTN.

Coiled coils occupy residues 34–133 (RLLE…KGTL) and 175–231 (NKLL…FQWE).

This sequence belongs to the CFAP73 family.

The protein is Coiled-coil domain-containing protein 42 like-2 of Xenopus tropicalis (Western clawed frog).